We begin with the raw amino-acid sequence, 506 residues long: ATP synthase subunit alpha (506 aa).

169 to 176 (GDRGTGKT) is a binding site for ATP.

It belongs to the ATPase alpha/beta chains family. As to quaternary structure, F-type ATPases have 2 components, CF(1) - the catalytic core - and CF(0) - the membrane proton channel. CF(1) has five subunits: alpha(3), beta(3), gamma(1), delta(1), epsilon(1). CF(0) has three main subunits: a(1), b(2) and c(9-12). The alpha and beta chains form an alternating ring which encloses part of the gamma chain. CF(1) is attached to CF(0) by a central stalk formed by the gamma and epsilon chains, while a peripheral stalk is formed by the delta and b chains.

The protein localises to the cell membrane. It catalyses the reaction ATP + H2O + 4 H(+)(in) = ADP + phosphate + 5 H(+)(out). Its function is as follows. Produces ATP from ADP in the presence of a proton gradient across the membrane. The alpha chain is a regulatory subunit. The protein is ATP synthase subunit alpha of Symbiobacterium thermophilum (strain DSM 24528 / JCM 14929 / IAM 14863 / T).